We begin with the raw amino-acid sequence, 343 residues long: Malate dehydrogenase, peroxisomal (343 aa).

Residues 8–14 and D34 each bind NAD(+); that span reads GASGGVG. Substrate contacts are provided by R80 and R86. NAD(+)-binding positions include N93 and 116–118; that span reads ISN. Substrate contacts are provided by N118 and R152. The Proton acceptor role is filled by H187. M237 contributes to the NAD(+) binding site.

The protein belongs to the LDH/MDH superfamily. MDH type 1 family. Homodimer.

Its subcellular location is the peroxisome. The catalysed reaction is (S)-malate + NAD(+) = oxaloacetate + NADH + H(+). The sequence is that of Malate dehydrogenase, peroxisomal (MDH3) from Saccharomyces cerevisiae (strain ATCC 204508 / S288c) (Baker's yeast).